The chain runs to 332 residues: tRNA N6-adenosine threonylcarbamoyltransferase (332 aa).

Fe cation is bound by residues H108 and H112. Substrate contacts are provided by residues 129–133 (LISGG), D161, E178, and S258. A Fe cation-binding site is contributed by D286.

The protein belongs to the KAE1 / TsaD family. Fe(2+) is required as a cofactor.

The protein resides in the cytoplasm. It carries out the reaction L-threonylcarbamoyladenylate + adenosine(37) in tRNA = N(6)-L-threonylcarbamoyladenosine(37) in tRNA + AMP + H(+). In terms of biological role, required for the formation of a threonylcarbamoyl group on adenosine at position 37 (t(6)A37) in tRNAs that read codons beginning with adenine. Is probably involved in the transfer of the threonylcarbamoyl moiety of threonylcarbamoyl-AMP (TC-AMP) to the N6 group of A37. The sequence is that of tRNA N6-adenosine threonylcarbamoyltransferase from Pyrobaculum arsenaticum (strain DSM 13514 / JCM 11321 / PZ6).